A 491-amino-acid chain; its full sequence is AAA-ATPase At2g46620 (491 aa).

Residues 1 to 21 traverse the membrane as a helical segment; it reads MGILWDSFLLLLVSTFALFLV. An ATP-binding site is contributed by 238–245; it reads GPSGTGKS. Residues 423–460 are disordered; the sequence is GTGRRLLLENGSRKSTSEDVSDDMSGSLCGGGGGSSPA.

It belongs to the AAA ATPase family. BCS1 subfamily. Mg(2+) serves as cofactor.

It is found in the membrane. It carries out the reaction ATP + H2O = ADP + phosphate + H(+). The chain is AAA-ATPase At2g46620 from Arabidopsis thaliana (Mouse-ear cress).